A 100-amino-acid polypeptide reads, in one-letter code: Phosphoribosylformylglycinamidine synthase subunit PurS (100 aa).

Belongs to the PurS family. In terms of assembly, homodimer. Part of the FGAM synthase complex composed of 1 PurL, 1 PurQ and 2 PurS subunits.

It is found in the cytoplasm. It carries out the reaction N(2)-formyl-N(1)-(5-phospho-beta-D-ribosyl)glycinamide + L-glutamine + ATP + H2O = 2-formamido-N(1)-(5-O-phospho-beta-D-ribosyl)acetamidine + L-glutamate + ADP + phosphate + H(+). The protein operates within purine metabolism; IMP biosynthesis via de novo pathway; 5-amino-1-(5-phospho-D-ribosyl)imidazole from N(2)-formyl-N(1)-(5-phospho-D-ribosyl)glycinamide: step 1/2. Part of the phosphoribosylformylglycinamidine synthase complex involved in the purines biosynthetic pathway. Catalyzes the ATP-dependent conversion of formylglycinamide ribonucleotide (FGAR) and glutamine to yield formylglycinamidine ribonucleotide (FGAM) and glutamate. The FGAM synthase complex is composed of three subunits. PurQ produces an ammonia molecule by converting glutamine to glutamate. PurL transfers the ammonia molecule to FGAR to form FGAM in an ATP-dependent manner. PurS interacts with PurQ and PurL and is thought to assist in the transfer of the ammonia molecule from PurQ to PurL. In Synechocystis sp. (strain ATCC 27184 / PCC 6803 / Kazusa), this protein is Phosphoribosylformylglycinamidine synthase subunit PurS.